The following is a 115-amino-acid chain: NAD(P)H-quinone oxidoreductase subunit M (115 aa).

Belongs to the complex I NdhM subunit family. As to quaternary structure, NDH-1 can be composed of about 15 different subunits; different subcomplexes with different compositions have been identified which probably have different functions.

The protein resides in the cellular thylakoid membrane. It catalyses the reaction a plastoquinone + NADH + (n+1) H(+)(in) = a plastoquinol + NAD(+) + n H(+)(out). It carries out the reaction a plastoquinone + NADPH + (n+1) H(+)(in) = a plastoquinol + NADP(+) + n H(+)(out). NDH-1 shuttles electrons from an unknown electron donor, via FMN and iron-sulfur (Fe-S) centers, to quinones in the respiratory and/or the photosynthetic chain. The immediate electron acceptor for the enzyme in this species is believed to be plastoquinone. Couples the redox reaction to proton translocation, and thus conserves the redox energy in a proton gradient. Cyanobacterial NDH-1 also plays a role in inorganic carbon-concentration. The polypeptide is NAD(P)H-quinone oxidoreductase subunit M (Prochlorococcus marinus (strain MIT 9303)).